Consider the following 211-residue polypeptide: Imidazole glycerol phosphate synthase subunit HisH (211 aa).

In terms of domain architecture, Glutamine amidotransferase type-1 spans 1-206 (MIGIIDYGRG…GKWVNEDATV (206 aa)). Cys79 (nucleophile) is an active-site residue. Active-site residues include His181 and Glu183.

Heterodimer of HisH and HisF.

It is found in the cytoplasm. The enzyme catalyses 5-[(5-phospho-1-deoxy-D-ribulos-1-ylimino)methylamino]-1-(5-phospho-beta-D-ribosyl)imidazole-4-carboxamide + L-glutamine = D-erythro-1-(imidazol-4-yl)glycerol 3-phosphate + 5-amino-1-(5-phospho-beta-D-ribosyl)imidazole-4-carboxamide + L-glutamate + H(+). It carries out the reaction L-glutamine + H2O = L-glutamate + NH4(+). Its pathway is amino-acid biosynthesis; L-histidine biosynthesis; L-histidine from 5-phospho-alpha-D-ribose 1-diphosphate: step 5/9. Functionally, IGPS catalyzes the conversion of PRFAR and glutamine to IGP, AICAR and glutamate. The HisH subunit catalyzes the hydrolysis of glutamine to glutamate and ammonia as part of the synthesis of IGP and AICAR. The resulting ammonia molecule is channeled to the active site of HisF. The sequence is that of Imidazole glycerol phosphate synthase subunit HisH from Desulfitobacterium hafniense (strain Y51).